The following is a 196-amino-acid chain: Alpha-crystallin A chain (196 aa).

The residue at position 1 (Met1) is an N-acetylmethionine. Positions 1 to 63 (MDVTIQHPWF…RTVLDSCISE (63 aa)) are required for complex formation with BFSP1 and BFSP2. Gln6 is subject to Deamidated glutamine; partial. Ser45 is modified (phosphoserine). The residue at position 50 (Gln50) is a Deamidated glutamine; partial. One can recognise a sHSP domain in the interval 76–185 (HAGNPENNPI…GHSERAIPVS (110 aa)). 2 positions are modified to N6-acetyllysine: Lys93 and Lys122. Residue His123 coordinates Zn(2+). Asn124 is modified (deamidated asparagine; partial). Zn(2+) contacts are provided by Glu125 and His130. Ser145 carries the phosphoserine modification. Position 170 is a deamidated glutamine; partial (Gln170). Residues 170–196 (QSGLDAGHSERAIPVSQEEKPSSAPLF) form a disordered region. The segment covering 176-190 (GHSERAIPVSQEEKP) has biased composition (basic and acidic residues). A Zn(2+)-binding site is contributed by His177. Residue Ser185 is glycosylated (O-linked (GlcNAc) serine).

Belongs to the small heat shock protein (HSP20) family. In terms of assembly, heteromer composed of three CRYAA and one CRYAB subunits. Inter-subunit bridging via zinc ions enhances stability, which is crucial as there is no protein turn over in the lens. Can also form homodimers and homotetramers (dimers of dimers) which serve as the building blocks of homooligomers. Within homooligomers, the zinc-binding motif is created from residues of 3 different molecules. His-123 and Glu-125 from one molecule are ligands of the zinc ion, and His-130 and His-177 residues from additional molecules complete the site with tetrahedral coordination geometry. Part of a complex required for lens intermediate filament formation composed of BFSP1, BFSP2 and CRYAA. Post-translationally, acetylation at Lys-93 may increase chaperone activity. In terms of processing, undergoes age-dependent proteolytical cleavage at the C-terminus.

The protein localises to the cytoplasm. It localises to the nucleus. Functionally, contributes to the transparency and refractive index of the lens. Acts as a chaperone, preventing aggregation of various proteins under a wide range of stress conditions. Required for the correct formation of lens intermediate filaments as part of a complex composed of BFSP1, BFSP2 and CRYAA. The sequence is that of Alpha-crystallin A chain (CRYAA) from Spalax ehrenbergi (Middle East blind mole rat).